A 223-amino-acid chain; its full sequence is Endonuclease NucS (223 aa).

It belongs to the NucS endonuclease family.

The protein localises to the cytoplasm. Cleaves both 3' and 5' ssDNA extremities of branched DNA structures. The polypeptide is Endonuclease NucS (Mycolicibacterium vanbaalenii (strain DSM 7251 / JCM 13017 / BCRC 16820 / KCTC 9966 / NRRL B-24157 / PYR-1) (Mycobacterium vanbaalenii)).